The chain runs to 299 residues: Probable alpha-L-glutamate ligase (299 aa).

The region spanning 111–293 (LQALAAANIA…VATQMIAYLE (183 aa)) is the ATP-grasp domain. ATP contacts are provided by residues Lys-147, 184 to 185 (DF), Asp-193, and 217 to 219 (RAN). Mg(2+)-binding residues include Asp-254, Glu-266, and Asn-268. Residues Asp-254, Glu-266, and Asn-268 each coordinate Mn(2+).

The protein belongs to the RimK family. It depends on Mg(2+) as a cofactor. Requires Mn(2+) as cofactor.

This chain is Probable alpha-L-glutamate ligase, found in Mannheimia succiniciproducens (strain KCTC 0769BP / MBEL55E).